Reading from the N-terminus, the 186-residue chain is Nicotinamide-nucleotide adenylyltransferase (186 aa).

It belongs to the archaeal NMN adenylyltransferase family.

It localises to the cytoplasm. The enzyme catalyses beta-nicotinamide D-ribonucleotide + ATP + H(+) = diphosphate + NAD(+). The protein operates within cofactor biosynthesis; NAD(+) biosynthesis; NAD(+) from nicotinamide D-ribonucleotide: step 1/1. The polypeptide is Nicotinamide-nucleotide adenylyltransferase (Pyrococcus abyssi (strain GE5 / Orsay)).